The primary structure comprises 78 residues: RNA-binding protein Hfq (78 aa).

The Sm domain maps to 10-69; sequence DPFLNALRKEHVPVSIYLVNGIKLQGNIESFDQYVVLLRNTVTQMVYKHAISTVVPARPV.

This sequence belongs to the Hfq family. As to quaternary structure, homohexamer.

RNA chaperone that binds small regulatory RNA (sRNAs) and mRNAs to facilitate mRNA translational regulation in response to envelope stress, environmental stress and changes in metabolite concentrations. Also binds with high specificity to tRNAs. This is RNA-binding protein Hfq from Paraburkholderia phytofirmans (strain DSM 17436 / LMG 22146 / PsJN) (Burkholderia phytofirmans).